Reading from the N-terminus, the 73-residue chain is Cell division protein ZapB (73 aa).

The stretch at 3–66 (LELLSKLETK…SWNEKVTGLV (64 aa)) forms a coiled coil.

This sequence belongs to the ZapB family. In terms of assembly, homodimer. The ends of the coiled-coil dimer bind to each other, forming polymers. Interacts with FtsZ.

The protein localises to the cytoplasm. Functionally, non-essential, abundant cell division factor that is required for proper Z-ring formation. It is recruited early to the divisome by direct interaction with FtsZ, stimulating Z-ring assembly and thereby promoting cell division earlier in the cell cycle. Its recruitment to the Z-ring requires functional FtsA or ZipA. The polypeptide is Cell division protein ZapB (Shewanella baltica (strain OS223)).